Consider the following 264-residue polypeptide: Thiazole synthase (264 aa).

Lys106 (schiff-base intermediate with DXP) is an active-site residue. Residues Gly167, 193-194 (AG), and 215-216 (NT) each bind 1-deoxy-D-xylulose 5-phosphate.

Belongs to the ThiG family. In terms of assembly, homotetramer. Forms heterodimers with either ThiH or ThiS.

It is found in the cytoplasm. It carries out the reaction [ThiS sulfur-carrier protein]-C-terminal-Gly-aminoethanethioate + 2-iminoacetate + 1-deoxy-D-xylulose 5-phosphate = [ThiS sulfur-carrier protein]-C-terminal Gly-Gly + 2-[(2R,5Z)-2-carboxy-4-methylthiazol-5(2H)-ylidene]ethyl phosphate + 2 H2O + H(+). The protein operates within cofactor biosynthesis; thiamine diphosphate biosynthesis. Its function is as follows. Catalyzes the rearrangement of 1-deoxy-D-xylulose 5-phosphate (DXP) to produce the thiazole phosphate moiety of thiamine. Sulfur is provided by the thiocarboxylate moiety of the carrier protein ThiS. In vitro, sulfur can be provided by H(2)S. This is Thiazole synthase from Xanthomonas euvesicatoria pv. vesicatoria (strain 85-10) (Xanthomonas campestris pv. vesicatoria).